We begin with the raw amino-acid sequence, 344 residues long: DNA-directed RNA polymerase subunit alpha (344 aa).

An alpha N-terminal domain (alpha-NTD) region spans residues 1 to 239; that stretch reads MADHWNKLTR…DQLQSFISFD (239 aa). The tract at residues 254-344 is alpha C-terminal domain (alpha-CTD); the sequence is VLPYDHNLLR…ENLSKQYSED (91 aa).

This sequence belongs to the RNA polymerase alpha chain family. In terms of assembly, homodimer. The RNAP catalytic core consists of 2 alpha, 1 beta, 1 beta' and 1 omega subunit. When a sigma factor is associated with the core the holoenzyme is formed, which can initiate transcription.

The catalysed reaction is RNA(n) + a ribonucleoside 5'-triphosphate = RNA(n+1) + diphosphate. Functionally, DNA-dependent RNA polymerase catalyzes the transcription of DNA into RNA using the four ribonucleoside triphosphates as substrates. This Anaplasma phagocytophilum (strain HZ) protein is DNA-directed RNA polymerase subunit alpha.